The chain runs to 454 residues: Cholesterol 7-desaturase nvd (454 aa).

2 helical membrane-spanning segments follow: residues 13–33 (VLCPVGALLLCWVGSVLLGAG) and 47–67 (TTLSRTPWLVVLVPLLVLWGW). The 105-residue stretch at 117 to 221 (WYRALDSHLL…SCELNGMVFV (105 aa)) folds into the Rieske domain. Residues cysteine 158, histidine 160, cysteine 178, and histidine 181 each coordinate [2Fe-2S] cluster.

Belongs to the cholesterol 7-desaturase family. Requires [2Fe-2S] cluster as cofactor.

The protein resides in the membrane. The enzyme catalyses cholesterol + NADPH + O2 + H(+) = 7-dehydrocholesterol + NADP(+) + 2 H2O. It catalyses the reaction cholesterol + NADH + O2 + H(+) = 7-dehydrocholesterol + NAD(+) + 2 H2O. Its pathway is steroid hormone biosynthesis; dafachronic acid biosynthesis. Its function is as follows. Catalyzes the production of 7-dehydrocholesterol (7-DHC or cholesta-5,7-dien-3beta-ol) by inserting a double bond (desaturating) at the C7-C8 single bond of cholesterol. This reaction is the first step in the synthesis of the steroid hormone Delta(7)-dafachronic acid. The polypeptide is Cholesterol 7-desaturase nvd (nvd) (Xenopus laevis (African clawed frog)).